Reading from the N-terminus, the 265-residue chain is Glutamate racemase (265 aa).

Residues 12–13 (DS) and 44–45 (YG) contribute to the substrate site. Cys75 functions as the Proton donor/acceptor in the catalytic mechanism. 76–77 (NT) is a substrate binding site. Catalysis depends on Cys186, which acts as the Proton donor/acceptor. 187–188 (TH) is a binding site for substrate.

The protein belongs to the aspartate/glutamate racemases family.

The enzyme catalyses L-glutamate = D-glutamate. The protein operates within cell wall biogenesis; peptidoglycan biosynthesis. In terms of biological role, provides the (R)-glutamate required for cell wall biosynthesis. This is Glutamate racemase from Pseudomonas putida (strain W619).